We begin with the raw amino-acid sequence, 171 residues long: 3-hydroxydecanoyl-[acyl-carrier-protein] dehydratase (171 aa).

The active site involves His70.

It belongs to the thioester dehydratase family. FabA subfamily. Homodimer.

It localises to the cytoplasm. The enzyme catalyses a (3R)-hydroxyacyl-[ACP] = a (2E)-enoyl-[ACP] + H2O. It carries out the reaction (3R)-hydroxydecanoyl-[ACP] = (2E)-decenoyl-[ACP] + H2O. It catalyses the reaction (2E)-decenoyl-[ACP] = (3Z)-decenoyl-[ACP]. It functions in the pathway lipid metabolism; fatty acid biosynthesis. Necessary for the introduction of cis unsaturation into fatty acids. Catalyzes the dehydration of (3R)-3-hydroxydecanoyl-ACP to E-(2)-decenoyl-ACP and then its isomerization to Z-(3)-decenoyl-ACP. Can catalyze the dehydratase reaction for beta-hydroxyacyl-ACPs with saturated chain lengths up to 16:0, being most active on intermediate chain length. The polypeptide is 3-hydroxydecanoyl-[acyl-carrier-protein] dehydratase (Pseudomonas putida (strain GB-1)).